Consider the following 195-residue polypeptide: ADP-ribosylation factor L (195 aa).

Glycine 2 carries N-myristoyl glycine lipidation. GTP is bound by residues 25 to 32 (GLENSGKT), 72 to 76 (DLLYP), and 131 to 134 (NKQD).

Belongs to the small GTPase superfamily. Arf family.

Its function is as follows. May be involved in trafficking events within the endosomal system. This is ADP-ribosylation factor L (arrL) from Dictyostelium discoideum (Social amoeba).